Here is an 868-residue protein sequence, read N- to C-terminus: Rifampicin phosphotransferase (868 aa).

Residues 5–317 are ATP-binding; sequence TERYVLDLQE…FHIVQSRPIT (313 aa). K26, R120, G135, T139, Q186, E300, Q312, and R314 together coordinate ATP. Residues 330 to 755 are rifampicin-binding; sequence NHVYVSVGHQ…TSDGEALTGA (426 aa). The segment at 410–430 is disordered; the sequence is FVPSLPDAPPAGPRAGAAPEP. Residues 768–866 are swivel phosphohistidine; that stretch reads GLPVSTGTVE…VHGTDGYIEI (99 aa). The active-site Tele-phosphohistidine intermediate is H826.

The protein belongs to the rifampicin phosphotransferase family.

It carries out the reaction rifampicin + ATP + H2O = 21-phosphorifampicin + AMP + phosphate + 2 H(+). Its function is as follows. Catalyzes the phosphorylation of rifampicin, also known as rifampin (RIF), leading to its inactivation. Confers high level resistance to a variety of clinically used rifamycin antibiotics. Does not show phosphoenolpyruvate (PEP) synthase activity. This chain is Rifampicin phosphotransferase, found in Streptomyces sviceus (strain ATCC 29083 / DSM 924 / JCM 4929 / NBRC 13980 / NCIMB 11184 / NRRL 5439 / UC 5370).